Here is a 258-residue protein sequence, read N- to C-terminus: Shikimate dehydrogenase (NADP(+)) (258 aa).

Shikimate contacts are provided by residues 14-16 and T61; that span reads SES. K65 acts as the Proton acceptor in catalysis. Shikimate-binding residues include N86 and D101. NADP(+) contacts are provided by residues 125-129 and L211; that span reads GSGGS. Y213 lines the shikimate pocket. G234 provides a ligand contact to NADP(+).

The protein belongs to the shikimate dehydrogenase family. Homodimer.

The enzyme catalyses shikimate + NADP(+) = 3-dehydroshikimate + NADPH + H(+). It participates in metabolic intermediate biosynthesis; chorismate biosynthesis; chorismate from D-erythrose 4-phosphate and phosphoenolpyruvate: step 4/7. Functionally, involved in the biosynthesis of the chorismate, which leads to the biosynthesis of aromatic amino acids. Catalyzes the reversible NADPH linked reduction of 3-dehydroshikimate (DHSA) to yield shikimate (SA). In Clostridium botulinum (strain 657 / Type Ba4), this protein is Shikimate dehydrogenase (NADP(+)).